The following is a 493-amino-acid chain: Ribonuclease Y (493 aa).

Residues 19–39 (IFAILFLIIVILNLGLLVFLA) traverse the membrane as a helical segment. One can recognise a KH domain in the interval 172–241 (SASFTVIESD…LTIRNILIND (70 aa)). Residues 300–392 (VLSHCLETGF…TQIGDKLSAG (93 aa)) form the HD domain.

It belongs to the RNase Y family.

The protein resides in the cell membrane. Endoribonuclease that initiates mRNA decay. This chain is Ribonuclease Y, found in Mycoplasma pneumoniae (strain ATCC 29342 / M129 / Subtype 1) (Mycoplasmoides pneumoniae).